A 55-amino-acid polypeptide reads, in one-letter code: Large ribosomal subunit protein bL33 (55 aa).

The protein belongs to the bacterial ribosomal protein bL33 family.

The polypeptide is Large ribosomal subunit protein bL33 (rpmG) (Nitrobacter hamburgensis (strain DSM 10229 / NCIMB 13809 / X14)).